The sequence spans 204 residues: Tic20 family protein Ycf60 (204 aa).

The next 4 helical transmembrane spans lie at 5–25 (LPSL…SFII), 87–107 (LMPL…IFFI), 133–153 (ILLF…PIEF), and 159–179 (GLMM…YSII).

It belongs to the Tic20 family.

It is found in the plastid. The protein resides in the chloroplast membrane. This Gracilaria tenuistipitata var. liui (Red alga) protein is Tic20 family protein Ycf60 (ycf60).